The primary structure comprises 351 residues: Phenylalanine--tRNA ligase alpha subunit (351 aa).

Mg(2+) is bound at residue glutamate 276.

The protein belongs to the class-II aminoacyl-tRNA synthetase family. Phe-tRNA synthetase alpha subunit type 1 subfamily. As to quaternary structure, tetramer of two alpha and two beta subunits. Mg(2+) is required as a cofactor.

Its subcellular location is the cytoplasm. It catalyses the reaction tRNA(Phe) + L-phenylalanine + ATP = L-phenylalanyl-tRNA(Phe) + AMP + diphosphate + H(+). The protein is Phenylalanine--tRNA ligase alpha subunit of Psychrobacter arcticus (strain DSM 17307 / VKM B-2377 / 273-4).